The primary structure comprises 238 residues: MORN repeat-containing protein 3 (238 aa).

7 MORN repeats span residues 38-60 (YTGE…RRKS), 62-84 (YEGD…DSNT), 91-113 (YSGY…AKEY), 114-136 (YEGE…NGDI), 137-159 (YEGE…NENR), 160-182 (YEGS…NKGQ), and 184-205 (YEGV…GRTE).

It localises to the cytoplasmic vesicle. The protein resides in the secretory vesicle. Its subcellular location is the acrosome. Its function is as follows. Assembles a suppression complex (suppresome) by tethering SIRT1 and MDM2 to regulate composite modifications of p53/TP53. Confers both deacetylation-mediated functional inactivation, by SIRT1, and ubiquitination-dependent degradation, by MDM2, of p53/TP53, promoting a proliferative and cell survival behaviors. May play a role in the regulation of spermatogenesis. The chain is MORN repeat-containing protein 3 (morn3) from Xenopus laevis (African clawed frog).